The primary structure comprises 226 residues: MNPIVINRLQRKLGYTFQQQELLLQALTHRSASSKHNERLEFLGDSILSFVIANELYRRFPRVDEGDMSRMRATLVRGNTLAEMAREFDLGECLRLGPGELKSGGFRRESILADTVEALIGGVFLDSDIHTIERLILEWYHSRLEEISPGDKQKDPKTRLQEYLQGRHLPLPSYLVVQVRGEAHDQEFTIHCQVSGLNEPVIGTGSSRRKAEQAAAEQALKQLELE.

Positions 6–128 (INRLQRKLGY…LIGGVFLDSD (123 aa)) constitute an RNase III domain. Position 41 (Glu-41) interacts with Mg(2+). Asp-45 is an active-site residue. Asp-114 and Glu-117 together coordinate Mg(2+). Glu-117 is an active-site residue. The 71-residue stretch at 155–225 (DPKTRLQEYL…AEQALKQLEL (71 aa)) folds into the DRBM domain.

The protein belongs to the ribonuclease III family. As to quaternary structure, homodimer. Mg(2+) serves as cofactor.

It localises to the cytoplasm. The catalysed reaction is Endonucleolytic cleavage to 5'-phosphomonoester.. Functionally, digests double-stranded RNA. Involved in the processing of primary rRNA transcript to yield the immediate precursors to the large and small rRNAs (23S and 16S). Processes some mRNAs, and tRNAs when they are encoded in the rRNA operon. Processes pre-crRNA and tracrRNA of type II CRISPR loci if present in the organism. The sequence is that of Ribonuclease 3 from Yersinia pseudotuberculosis serotype O:1b (strain IP 31758).